The primary structure comprises 523 residues: Keratin, type II cytoskeletal 71 (523 aa).

Residues 1–129 (MSRQFTCKSG…DPEIQKVRAQ (129 aa)) form a head region. The segment at 130-165 (EREQIKALNNKFASFIDKVRFLEQQNQVLETKWELL) is coil 1A. An IF rod domain is found at 130-443 (EREQIKALNN…KLLESEECRM (314 aa)). The tract at residues 166–184 (QQLDLNNCKNNLEPILEGY) is linker 1. The coil 1B stretch occupies residues 185–276 (ISNLRKQLET…CLFEAEITQI (92 aa)). The interval 277-300 (QSHISDMSVILSMDNNRNLDLDSI) is linker 12. The coil 2 stretch occupies residues 301-439 (IDEVRTQYEE…ATYRKLLESE (139 aa)). Residues 440–523 (ECRMSGEFPS…LSAPSKKTSR (84 aa)) are tail. A disordered region spans residues 492–523 (GGEGRSRGSANDYKDTLGKGSSLSAPSKKTSR). The segment covering 493–508 (GEGRSRGSANDYKDTL) has biased composition (basic and acidic residues). The span at 510 to 523 (KGSSLSAPSKKTSR) shows a compositional bias: polar residues.

Belongs to the intermediate filament family. As to quaternary structure, heterodimer of a type I and a type II keratin. Associates with KRT16 and/or KRT17. In terms of tissue distribution, highly expressed in hair follicles from scalp. Specifically expressed in the inner root sheath (IRS) of the hair follicle. Present in the all 3 IRS layers: the cuticle, the Henle and the Huxley layers. Also detected in the pseudopods of specialized Huxley cells, termed Fluegelzellen, along the area of differentiated Henle cells (at protein level).

The protein localises to the cytoplasm. It localises to the cytoskeleton. Plays a central role in hair formation. Essential component of keratin intermediate filaments in the inner root sheath (IRS) of the hair follicle. This is Keratin, type II cytoskeletal 71 (KRT71) from Homo sapiens (Human).